We begin with the raw amino-acid sequence, 888 residues long: Autotaxin (888 aa).

The first 27 residues, 1 to 27 (MARRRSCQLHQVISLFTFAVGVNICLG), serve as a signal peptide directing secretion. A propeptide spans 28–35 (VTANRIKR) (removed by furin). N-linked (GlcNAc...) asparagine glycosylation is present at N54. SMB domains lie at 55-98 (ISGS…LKTA) and 99-143 (GGWE…GESH). Intrachain disulfides connect C59/C76, C63/C94, C74/C87, C80/C86, C103/C120, C108/C138, C118/C131, C124/C130, C149/C195, and C157/C351. The Cell attachment site signature appears at 127–129 (RGD). Positions 145–502 (VDDDCEEIKT…PTFKYKTKVP (358 aa)) are phosphodiesterase. 2 residues coordinate Zn(2+): D172 and T210. Residue T210 is the Nucleophile of the active site. The 1-(9Z-octadecenoyl)-sn-glycero-3-phosphate site is built by T210, N231, and D312. Residues T210, N231, and D312 each contribute to the 1-hexadecanoyl-sn-glycero-3-phosphate site. 1-tetradecanoyl-sn-glycerol 3-phosphate is bound by residues T210, N231, and D312. The Zn(2+) site is built by D312, H316, D359, and H360. Disulfide bonds link C367/C469, C414/C831, C567/C692, C569/C677, and C800/C810. The N-linked (GlcNAc...) asparagine glycan is linked to N411. Position 475 (H475) interacts with Zn(2+). Residue H475 coordinates 1-(9Z-octadecenoyl)-sn-glycero-3-phosphate. H475 provides a ligand contact to 1-hexadecanoyl-sn-glycero-3-phosphate. Residue H475 coordinates 1-tetradecanoyl-sn-glycerol 3-phosphate. N-linked (GlcNAc...) asparagine glycosylation is present at N525. Positions 623–888 (LYGRPAVLYR…TYLQTYESEI (266 aa)) are nuclease-like domain. 5 residues coordinate Ca(2+): D765, D767, D769, L771, and D773. The N-linked (GlcNAc...) asparagine glycan is linked to N832. Residues 855-876 (IEHLTSLDFFRKTSRSYPEILT) form a required for secretion region.

Belongs to the nucleotide pyrophosphatase/phosphodiesterase family. Requires Zn(2+) as cofactor. Ca(2+) serves as cofactor. Post-translationally, N-glycosylation, but not furin-cleavage, plays a critical role on secretion and on lysoPLD activity. The interdomain disulfide bond between Cys-414 and Cys-831 is essential for catalytic activity. Detected in fetal serum (at protein level).

The protein resides in the secreted. It catalyses the reaction a 1-O-alkyl-sn-glycero-3-phosphoethanolamine + H2O = a 1-O-alkyl-sn-glycero-3-phosphate + ethanolamine + H(+). The catalysed reaction is a 1-acyl-sn-glycero-3-phosphoethanolamine + H2O = a 1-acyl-sn-glycero-3-phosphate + ethanolamine + H(+). The enzyme catalyses 1-(9Z-octadecenoyl)-sn-glycero-3-phosphoethanolamine + H2O = 1-(9Z-octadecenoyl)-sn-glycero-3-phosphate + ethanolamine + H(+). It carries out the reaction a 1-O-alkyl-sn-glycero-3-phosphocholine + H2O = a 1-O-alkyl-sn-glycero-3-phosphate + choline + H(+). It catalyses the reaction 1-O-(9Z-octadecenyl)-sn-glycero-3-phosphocholine + H2O = 1-O-(9Z-octadecenyl)-sn-glycero-3-phosphate + choline + H(+). The catalysed reaction is 1-O-hexadecyl-sn-glycero-3-phosphocholine + H2O = 1-O-hexadecyl-sn-glycero-3-phosphate + choline + H(+). The enzyme catalyses a 1-O-(1Z-alkenyl)-sn-glycero-3-phosphocholine + H2O = a 1-O-(1Z-alkenyl)-sn-glycero-3-phosphate + choline + H(+). It carries out the reaction a 1-acyl-sn-glycero-3-phosphocholine + H2O = a 1-acyl-sn-glycero-3-phosphate + choline + H(+). It catalyses the reaction 1-dodecanoyl-sn-glycero-3-phosphocholine + H2O = 1-dodecanoyl-sn-glycerol 3-phosphate + choline + H(+). The catalysed reaction is 1-(9Z-octadecenoyl)-sn-glycero-3-phosphocholine + H2O = 1-(9Z-octadecenoyl)-sn-glycero-3-phosphate + choline + H(+). The enzyme catalyses 1-tetradecanoyl-sn-glycero-3-phosphocholine + H2O = 1-tetradecanoyl-sn-glycerol 3-phosphate + choline + H(+). It carries out the reaction 1-decanoyl-sn-glycero-3-phosphocholine + H2O = 1-decanoyl-sn-glycero-3-phosphate + choline + H(+). It catalyses the reaction 1-octadecanoyl-sn-glycero-3-phosphocholine + H2O = 1-octadecanoyl-sn-glycero-3-phosphate + choline + H(+). The catalysed reaction is 1-hexadecanoyl-sn-glycero-3-phosphocholine + H2O = 1-hexadecanoyl-sn-glycero-3-phosphate + choline + H(+). The enzyme catalyses 1-hexanoyl-sn-glycero-3-phosphocholine + H2O = 1-hexanoyl-sn-glycero-3-phosphate + choline + H(+). It carries out the reaction 1-(9Z,12Z)-octadecadienoyl-sn-glycero-3-phosphocholine + H2O = 1-(9Z,12Z)-octadecadienoyl-sn-glycero-3-phosphate + choline + H(+). It catalyses the reaction sphing-4-enine-phosphocholine + H2O = sphing-4-enine 1-phosphate + choline + H(+). The catalysed reaction is 1-(5Z,8Z,11Z,14Z-eicosatetraenoyl)-sn-glycero-3-phosphocholine + H2O = 1-(5Z,8Z,11Z,14Z-eicosatetraenoyl)-sn-glycero-3-phosphate + choline + H(+). The enzyme catalyses a 2-acyl-sn-glycero-3-phosphocholine + H2O = a 2-acyl-sn-glycerol 3-phosphate + choline + H(+). It carries out the reaction a 1,2-diacyl-sn-glycero-3-phosphocholine + H2O = a 1,2-diacyl-sn-glycero-3-phosphate + choline + H(+). It catalyses the reaction 1,2-dioctanoyl-sn-glycero-3-phosphocholine + H2O = 1,2-dioctanoyl-sn-glycero-3-phosphate + choline + H(+). The catalysed reaction is 1,2-didecanoyl-sn-glycero-3-phosphocholine + H2O = 1,2-didecanoyl-sn-glycero-3-phosphate + choline + H(+). The enzyme catalyses a 1-acyl-sn-glycero-3-phospho-L-serine + H2O = a 1-acyl-sn-glycero-3-phosphate + L-serine + H(+). It carries out the reaction 1-(9Z-octadecenoyl)-sn-glycero-3-phospho-L-serine + H2O = 1-(9Z-octadecenoyl)-sn-glycero-3-phosphate + L-serine + H(+). It catalyses the reaction a 2-acyl-sn-glycero-3-phospho-L-serine + H2O = a 2-acyl-sn-glycerol 3-phosphate + L-serine + H(+). In terms of biological role, secreted lysophospholipase D that hydrolyzes lysophospholipids to produce the signaling molecule lysophosphatidic acid (LPA) in extracellular fluids. Its major substrate is lysophosphatidylcholine. Can also act on sphingosylphosphorylcholine producing sphingosine-1-phosphate, a modulator of cell motility. Can hydrolyze, in vitro, bis-pNPP, to some extent pNP-TMP, and barely ATP. Involved in several motility-related processes such as angiogenesis and neurite outgrowth. Acts as an angiogenic factor by stimulating migration of smooth muscle cells and microtubule formation. Stimulates migration of melanoma cells, probably via a pertussis toxin-sensitive G protein. May have a role in induction of parturition. Possible involvement in cell proliferation and adipose tissue development. Required for LPA production in activated platelets, cleaves the sn-1 lysophospholipids to generate sn-1 lysophosphatidic acids containing predominantly 18:2 and 20:4 fatty acids. Shows a preference for the sn-1 to the sn-2 isomer of 1-O-alkyl-sn-glycero-3-phosphocholine (lyso-PAF). The chain is Autotaxin from Bos taurus (Bovine).